The following is a 252-amino-acid chain: 2-succinyl-6-hydroxy-2,4-cyclohexadiene-1-carboxylate synthase (252 aa).

The protein belongs to the AB hydrolase superfamily. MenH family. As to quaternary structure, monomer.

The enzyme catalyses 5-enolpyruvoyl-6-hydroxy-2-succinyl-cyclohex-3-ene-1-carboxylate = (1R,6R)-6-hydroxy-2-succinyl-cyclohexa-2,4-diene-1-carboxylate + pyruvate. The protein operates within quinol/quinone metabolism; 1,4-dihydroxy-2-naphthoate biosynthesis; 1,4-dihydroxy-2-naphthoate from chorismate: step 3/7. It functions in the pathway quinol/quinone metabolism; menaquinone biosynthesis. In terms of biological role, catalyzes a proton abstraction reaction that results in 2,5-elimination of pyruvate from 2-succinyl-5-enolpyruvyl-6-hydroxy-3-cyclohexene-1-carboxylate (SEPHCHC) and the formation of 2-succinyl-6-hydroxy-2,4-cyclohexadiene-1-carboxylate (SHCHC). This chain is 2-succinyl-6-hydroxy-2,4-cyclohexadiene-1-carboxylate synthase, found in Shigella sonnei (strain Ss046).